Here is a 219-residue protein sequence, read N- to C-terminus: Small ribosomal subunit protein uS3c (219 aa).

Residues 47 to 118 (IKKNIRISSG…KINIAITRIT (72 aa)) form the KH type-2 domain.

The protein belongs to the universal ribosomal protein uS3 family. As to quaternary structure, part of the 30S ribosomal subunit.

The protein resides in the plastid. It is found in the chloroplast. The chain is Small ribosomal subunit protein uS3c (rps3) from Citrus sinensis (Sweet orange).